A 244-amino-acid chain; its full sequence is Venom nerve growth factor (244 aa).

The signal sequence occupies residues 1-18; it reads MSMLCYTLIIAFLIGIWA. Positions 19–125 are excised as a propeptide; that stretch reads APKSEDNVSL…SLNRNIRAKR (107 aa). Intrachain disulfides connect Cys-139/Cys-204, Cys-182/Cys-232, and Cys-192/Cys-234. Asn-148 is a glycosylation site (N-linked (GlcNAc...) asparagine).

The protein belongs to the NGF-beta family. As to quaternary structure, homodimer; non-covalently linked. Post-translationally, N-glycosylated. Expressed by the venom gland.

It localises to the secreted. Nerve growth factor is important for the development and maintenance of the sympathetic and sensory nervous systems. It stimulates division and differentiation of sympathetic and embryonic sensory neurons as well as basal forebrain cholinergic neurons in the brain. Its relevance in the snake venom is not clear. However, it has been shown to inhibit metalloproteinase-dependent proteolysis of platelet glycoprotein Ib alpha, suggesting a metalloproteinase inhibition to prevent metalloprotease autodigestion and/or protection against prey proteases. Binds a lipid between the two protein chains in the homodimer. The lipid-bound form promotes histamine relase from mouse mast cells, contrary to the lipid-free form. It promotes neurite outgrowth in rat PC12 pheochromocytoma cells. This chain is Venom nerve growth factor, found in Macrovipera lebetinus (Levantine viper).